The primary structure comprises 715 residues: Protein MTSS 2 (715 aa).

One can recognise an IMD domain in the interval Met1 to Ser249. The stretch at His134 to Asp156 forms a coiled coil. Composition is skewed to low complexity over residues Trp253–Ser274, Ser284–Ser295, and Thr312–Ser330. 3 disordered regions span residues Trp253 to Pro405, Leu420 to Asn485, and Ile527 to Pro562. Thr257 carries the phosphothreonine modification. Position 261 is a phosphoserine (Ser261). The span at Val331–Trp341 shows a compositional bias: polar residues. Residues Asp360–Glu369 show a composition bias toward basic and acidic residues. Ser404 is subject to Phosphoserine. Positions Ser429–Thr442 are enriched in low complexity. Polar residues predominate over residues Pro443–Ser455. Residues Ser542, Ser564, Ser575, Ser587, Ser597, and Ser602 each carry the phosphoserine modification. Thr606 carries the post-translational modification Phosphothreonine. The disordered stretch occupies residues Phe661–Asp690. The WH2 domain maps to Pro687–Thr704.

Belongs to the MTSS family. In terms of assembly, interacts (via IMD domain) with RAC1; this interaction may be important to potentiate PDGF-induced RAC1 activation.

The protein resides in the cytoplasm. Its subcellular location is the cell projection. It is found in the ruffle. Involved in plasma membrane dynamics. Potentiated PDGF-mediated formation of membrane ruffles and lamellipodia in fibroblasts, acting via RAC1 activation. May function in actin bundling. This is Protein MTSS 2 (Mtss2) from Mus musculus (Mouse).